Reading from the N-terminus, the 610-residue chain is Membrane protein insertase YidC (610 aa).

The chain crosses the membrane as a helical span at residues 7–27 (FFITIALSILILALWQVFYLG). The interval 36–82 (QARIEEQQRQAQQAAQNRQASSSTGDTPQMPANPDSIPGQGDTKAAG) is disordered. Residues 44–55 (RQAQQAAQNRQA) are compositionally biased toward low complexity. The next 5 helical transmembrane spans lie at 358–378 (FDLL…FYLI), 387–407 (NFGV…FPLA), 458–478 (WPVL…YVTI), 510–530 (TVPH…IMFL), and 546–566 (IFTW…AGLV).

Belongs to the OXA1/ALB3/YidC family. Type 1 subfamily. In terms of assembly, interacts with the Sec translocase complex via SecD. Specifically interacts with transmembrane segments of nascent integral membrane proteins during membrane integration.

The protein localises to the cell inner membrane. Its function is as follows. Required for the insertion and/or proper folding and/or complex formation of integral membrane proteins into the membrane. Involved in integration of membrane proteins that insert both dependently and independently of the Sec translocase complex, as well as at least some lipoproteins. Aids folding of multispanning membrane proteins. In Brucella melitensis biotype 1 (strain ATCC 23456 / CCUG 17765 / NCTC 10094 / 16M), this protein is Membrane protein insertase YidC.